Here is a 420-residue protein sequence, read N- to C-terminus: UDP-N-acetylglucosamine 1-carboxyvinyltransferase (420 aa).

A phosphoenolpyruvate-binding site is contributed by 22 to 23 (KN). Arg-91 is a binding site for UDP-N-acetyl-alpha-D-glucosamine. Cys-115 acts as the Proton donor in catalysis. Cys-115 is modified (2-(S-cysteinyl)pyruvic acid O-phosphothioketal). UDP-N-acetyl-alpha-D-glucosamine-binding positions include 120 to 124 (RPVDL), 160 to 163 (KVSV), Asp-305, and Ile-327.

Belongs to the EPSP synthase family. MurA subfamily.

The protein localises to the cytoplasm. It catalyses the reaction phosphoenolpyruvate + UDP-N-acetyl-alpha-D-glucosamine = UDP-N-acetyl-3-O-(1-carboxyvinyl)-alpha-D-glucosamine + phosphate. The protein operates within cell wall biogenesis; peptidoglycan biosynthesis. Its function is as follows. Cell wall formation. Adds enolpyruvyl to UDP-N-acetylglucosamine. This is UDP-N-acetylglucosamine 1-carboxyvinyltransferase from Erwinia tasmaniensis (strain DSM 17950 / CFBP 7177 / CIP 109463 / NCPPB 4357 / Et1/99).